The sequence spans 298 residues: MSSAAMSKYVNDMWPGSPQEKASPSTSGSGRSSRLSSRSRSRSSSRSSRRDSRSSSRSSSRSHSRPRRSRRSRSRSRRRHQRKYRRYSRSYSRSRSRSRSHRYHRDSRYERPRRYYKSPSPYRSRSRSRSRGRSQHRWSYYAITRGRRYYGFGRTVYPEDRPRWRERSRTRSRSRSRTPFRLSEKDRMELLEIAKANAAKALGTANFDLPASLRAKEASQGTAVSSSGPKVEHSEKQTEDATKNTSEKSSTQRNIAFSSNNSVAKPLQKTTKAAVEEKSSGSPKIDKKKSPYGLWIPV.

The tract at residues 1–135 is disordered; that stretch reads MSSAAMSKYV…SRSRSRGRSQ (135 aa). Phosphoserine is present on serine 17. The span at 23–36 shows a compositional bias: low complexity; the sequence is SPSTSGSGRSSRLS. Basic residues predominate over residues 60 to 105; the sequence is SRSHSRPRRSRRSRSRSRRRHQRKYRRYSRSYSRSRSRSRSHRYHR. Phosphoserine occurs at positions 118 and 120. The segment covering 124-135 has biased composition (basic residues); that stretch reads SRSRSRSRGRSQ. Arginine 145 is modified (omega-N-methylarginine). Disordered stretches follow at residues 161-181 and 218-298; these read RPRW…TPFR and ASQG…WIPV. The span at 219-228 shows a compositional bias: polar residues; it reads SQGTAVSSSG. The span at 230–246 shows a compositional bias: basic and acidic residues; the sequence is KVEHSEKQTEDATKNTS. Residues 247 to 271 are compositionally biased toward polar residues; the sequence is EKSSTQRNIAFSSNNSVAKPLQKTT. The segment covering 274 to 289 has biased composition (basic and acidic residues); that stretch reads AVEEKSSGSPKIDKKK. Position 282 is a phosphoserine (serine 282).

The protein belongs to the RSRP family. Phosphorylated. Phosphorylation at Ser-118 and Ser-120 mediates the interaction with spliceosome proteins.

The protein resides in the nucleus. In terms of biological role, probably acts as a spliceosomal factor that contributes to spliceosome assembly and regulates the isoform switching of proteins such as PARP6. The sequence is that of Arginine/serine-rich protein 1 (Rsrp1) from Mus musculus (Mouse).